Consider the following 192-residue polypeptide: Ribosome maturation factor RimP (192 aa).

It belongs to the RimP family.

The protein resides in the cytoplasm. Its function is as follows. Required for maturation of 30S ribosomal subunits. In Delftia acidovorans (strain DSM 14801 / SPH-1), this protein is Ribosome maturation factor RimP.